The chain runs to 264 residues: NADH-quinone oxidoreductase subunit I 2 (264 aa).

4Fe-4S ferredoxin-type domains follow at residues 57–86 (GFLE…ISLE) and 98–127 (TQFD…HTRE). The [4Fe-4S] cluster site is built by Cys-66, Cys-69, Cys-72, Cys-76, Cys-107, Cys-110, Cys-113, and Cys-117. Residues 183–264 (APQFLPPEPP…AAPAANPESK (82 aa)) are disordered. The segment covering 197-264 (AKPAAKAAPA…AAPAANPESK (68 aa)) has biased composition (low complexity).

The protein belongs to the complex I 23 kDa subunit family. In terms of assembly, NDH-1 is composed of 14 different subunits. Subunits NuoA, H, J, K, L, M, N constitute the membrane sector of the complex. It depends on [4Fe-4S] cluster as a cofactor.

The protein resides in the cell inner membrane. The enzyme catalyses a quinone + NADH + 5 H(+)(in) = a quinol + NAD(+) + 4 H(+)(out). Its function is as follows. NDH-1 shuttles electrons from NADH, via FMN and iron-sulfur (Fe-S) centers, to quinones in the respiratory chain. The immediate electron acceptor for the enzyme in this species is believed to be ubiquinone. Couples the redox reaction to proton translocation (for every two electrons transferred, four hydrogen ions are translocated across the cytoplasmic membrane), and thus conserves the redox energy in a proton gradient. This chain is NADH-quinone oxidoreductase subunit I 2, found in Anaeromyxobacter dehalogenans (strain 2CP-C).